We begin with the raw amino-acid sequence, 594 residues long: Alanine--tRNA ligase (594 aa).

Zn(2+)-binding residues include His-456, His-460, Cys-558, and His-562.

This sequence belongs to the class-II aminoacyl-tRNA synthetase family. Zn(2+) serves as cofactor.

Its subcellular location is the cytoplasm. It catalyses the reaction tRNA(Ala) + L-alanine + ATP = L-alanyl-tRNA(Ala) + AMP + diphosphate. Functionally, catalyzes the attachment of alanine to tRNA(Ala) in a two-step reaction: alanine is first activated by ATP to form Ala-AMP and then transferred to the acceptor end of tRNA(Ala). Also edits incorrectly charged Ser-tRNA(Ala) and Gly-tRNA(Ala) via its editing domain. In Borrelia garinii subsp. bavariensis (strain ATCC BAA-2496 / DSM 23469 / PBi) (Borreliella bavariensis), this protein is Alanine--tRNA ligase (alaS).